A 601-amino-acid polypeptide reads, in one-letter code: Probable cytochrome P450 525A1 (601 aa).

A helical transmembrane segment spans residues 12 to 32 (ISYFLTCSIFGFILWILTEQI). Residues 205–253 (NNNNNNNNNNNNNNNNNNNNNNNNNNNNNNNNNNNNNNNNNNNNNNNNN) are disordered. Cysteine 544 contacts heme.

This sequence belongs to the cytochrome P450 family. The cofactor is heme.

It localises to the membrane. The chain is Probable cytochrome P450 525A1 (cyp525A1) from Dictyostelium discoideum (Social amoeba).